Consider the following 508-residue polypeptide: Photosystem II CP47 reaction center protein (508 aa).

Helical transmembrane passes span 21 to 36, 101 to 115, 140 to 156, 203 to 218, 237 to 252, and 457 to 472; these read SVHI…WAGS, IVFS…IWHW, GIHL…FGAF, IAAG…FHLS, VLSS…AFVV, and SFAL…HGSR.

It belongs to the PsbB/PsbC family. PsbB subfamily. In terms of assembly, PSII is composed of 1 copy each of membrane proteins PsbA, PsbB, PsbC, PsbD, PsbE, PsbF, PsbH, PsbI, PsbJ, PsbK, PsbL, PsbM, PsbT, PsbX, PsbY, PsbZ, Psb30/Ycf12, at least 3 peripheral proteins of the oxygen-evolving complex and a large number of cofactors. It forms dimeric complexes. Binds multiple chlorophylls. PSII binds additional chlorophylls, carotenoids and specific lipids. serves as cofactor.

The protein resides in the plastid. It localises to the chloroplast thylakoid membrane. In terms of biological role, one of the components of the core complex of photosystem II (PSII). It binds chlorophyll and helps catalyze the primary light-induced photochemical processes of PSII. PSII is a light-driven water:plastoquinone oxidoreductase, using light energy to abstract electrons from H(2)O, generating O(2) and a proton gradient subsequently used for ATP formation. In Capsella bursa-pastoris (Shepherd's purse), this protein is Photosystem II CP47 reaction center protein.